The sequence spans 354 residues: Methylthioribose-1-phosphate isomerase (354 aa).

Substrate is bound by residues 58-60 (RGA), Arg-101, and Gln-204. Asp-245 (proton donor) is an active-site residue. 255 to 256 (NK) contributes to the substrate binding site.

Belongs to the eIF-2B alpha/beta/delta subunits family. MtnA subfamily.

It catalyses the reaction 5-(methylsulfanyl)-alpha-D-ribose 1-phosphate = 5-(methylsulfanyl)-D-ribulose 1-phosphate. It participates in amino-acid biosynthesis; L-methionine biosynthesis via salvage pathway; L-methionine from S-methyl-5-thio-alpha-D-ribose 1-phosphate: step 1/6. Catalyzes the interconversion of methylthioribose-1-phosphate (MTR-1-P) into methylthioribulose-1-phosphate (MTRu-1-P). In Xanthomonas euvesicatoria pv. vesicatoria (strain 85-10) (Xanthomonas campestris pv. vesicatoria), this protein is Methylthioribose-1-phosphate isomerase.